A 184-amino-acid chain; its full sequence is GTP cyclohydrolase 1 (184 aa).

Zn(2+)-binding residues include C75, H78, and C146.

The protein belongs to the GTP cyclohydrolase I family. Toroid-shaped homodecamer, composed of two pentamers of five dimers.

The catalysed reaction is GTP + H2O = 7,8-dihydroneopterin 3'-triphosphate + formate + H(+). Its pathway is cofactor biosynthesis; 7,8-dihydroneopterin triphosphate biosynthesis; 7,8-dihydroneopterin triphosphate from GTP: step 1/1. The sequence is that of GTP cyclohydrolase 1 from Pseudoalteromonas translucida (strain TAC 125).